Reading from the N-terminus, the 360-residue chain is tRNA (guanine-N(7)-)-methyltransferase (360 aa).

Positions 1–32 are disordered; that stretch reads MTPPPPKRQKRDEYRKATAEAASQPGPSDVAE. Residues Gly99 and 122–123 each bind S-adenosyl-L-methionine; that span reads EI. The disordered stretch occupies residues 177–196; it reads ADAASPVLSTDTEHTPTTLV. A compositionally biased stretch (polar residues) spans 183–196; that stretch reads VLSTDTEHTPTTLV. Residues 209 to 210 and Cys229 each bind S-adenosyl-L-methionine; that span reads NT. Asp232 is a catalytic residue. Residue 332 to 334 coordinates S-adenosyl-L-methionine; it reads TEE.

It belongs to the class I-like SAM-binding methyltransferase superfamily. TrmB family. Forms a complex with trm82.

It localises to the nucleus. It carries out the reaction guanosine(46) in tRNA + S-adenosyl-L-methionine = N(7)-methylguanosine(46) in tRNA + S-adenosyl-L-homocysteine. The protein operates within tRNA modification; N(7)-methylguanine-tRNA biosynthesis. In terms of biological role, catalyzes the formation of N(7)-methylguanine at position 46 (m7G46) in tRNA. The protein is tRNA (guanine-N(7)-)-methyltransferase (trm8) of Neosartorya fischeri (strain ATCC 1020 / DSM 3700 / CBS 544.65 / FGSC A1164 / JCM 1740 / NRRL 181 / WB 181) (Aspergillus fischerianus).